The primary structure comprises 49 residues: Glutathione peroxidase (49 aa).

Belongs to the glutathione peroxidase family.

It catalyses the reaction 2 glutathione + H2O2 = glutathione disulfide + 2 H2O. Inhibited by Cu(2+), SDS and DTT. Activity is slightly increased by Fe(2+), Mn(2+), triton X-100 and EDTA. Glutathione peroxidase which may protect the cell from oxidative damage. The protein is Glutathione peroxidase of Lactiplantibacillus plantarum (Lactobacillus plantarum).